The primary structure comprises 489 residues: Glycogen synthase (489 aa).

Lys-15 provides a ligand contact to ADP-alpha-D-glucose.

Belongs to the glycosyltransferase 1 family. Bacterial/plant glycogen synthase subfamily.

The catalysed reaction is [(1-&gt;4)-alpha-D-glucosyl](n) + ADP-alpha-D-glucose = [(1-&gt;4)-alpha-D-glucosyl](n+1) + ADP + H(+). It participates in glycan biosynthesis; glycogen biosynthesis. In terms of biological role, synthesizes alpha-1,4-glucan chains using ADP-glucose. The sequence is that of Glycogen synthase from Francisella tularensis subsp. tularensis (strain SCHU S4 / Schu 4).